A 167-amino-acid polypeptide reads, in one-letter code: Photosystem I assembly protein Ycf3 (167 aa).

TPR repeat units lie at residues 35-68, 72-105, and 120-153; these read AFTY…EIDP, SYIL…NPSL, and GEQA…APNN.

Belongs to the Ycf3 family.

It localises to the plastid. Its subcellular location is the chloroplast thylakoid membrane. Essential for the assembly of the photosystem I (PSI) complex. May act as a chaperone-like factor to guide the assembly of the PSI subunits. This Zygnema circumcarinatum (Green alga) protein is Photosystem I assembly protein Ycf3.